Reading from the N-terminus, the 257-residue chain is Exosome complex component Rrp4 (257 aa).

One can recognise an S1 motif domain in the interval 65-137 (GDNVLGKIVD…EVNQIDLTTK (73 aa)). The region spanning 147-206 (RGGQLVTITPSKVPRLIGKGGSMINMIKTLTGTRIIVGQNGWVWVSGKNDELERLAIEAI) is the KH domain.

It belongs to the RRP4 family. Component of the archaeal exosome complex. Forms a trimer of Rrp4 and/or Csl4 subunits. The trimer associates with a hexameric ring-like arrangement composed of 3 Rrp41-Rrp42 heterodimers.

Its subcellular location is the cytoplasm. Non-catalytic component of the exosome, which is a complex involved in RNA degradation. Increases the RNA binding and the efficiency of RNA degradation. Confers strong poly(A) specificity to the exosome. The protein is Exosome complex component Rrp4 of Thermococcus kodakarensis (strain ATCC BAA-918 / JCM 12380 / KOD1) (Pyrococcus kodakaraensis (strain KOD1)).